The following is a 51-amino-acid chain: DNA-binding protein (51 aa).

The segment at 1-51 (MVYRRRRSRSADGTYTRRRRSSGYRRRPGRPRTYRRSRSATRRSGYRRRRY) is disordered. 2 repeat units span residues 5 to 10 (RRRSRS) and 17 to 22 (RRRRSS). Residues 5 to 22 (RRRSRSADGTYTRRRRSS) are 2 X 6 AA repeats of R-R-R-R-S-S. Positions 16 to 51 (TRRRRSSGYRRRPGRPRTYRRSRSATRRSGYRRRRY) are enriched in basic residues.

Post-translationally, probably phosphorylated in infected cells.

Its subcellular location is the virion. Functionally, thought to be responsible for DNA condensation during packaging of the nucleocapsids. The protein is DNA-binding protein (P6.5) of Orgyia pseudotsugata (Douglas-fir tussock moth).